Here is a 193-residue protein sequence, read N- to C-terminus: UPF0397 protein PA0141 (193 aa).

Transmembrane regions (helical) follow at residues 11–31 (VTIA…SIPI), 43–63 (FLVF…GLLG), 69–89 (FFLF…LGFL), 109–129 (ILFF…LIAP), and 147–167 (GFLV…FLMS).

It belongs to the UPF0397 family.

It is found in the cell membrane. The polypeptide is UPF0397 protein PA0141 (Phytoplasma australiense).